The chain runs to 62 residues: Large ribosomal subunit protein bL28 (62 aa).

The protein belongs to the bacterial ribosomal protein bL28 family.

The sequence is that of Large ribosomal subunit protein bL28 from Moorella thermoacetica (strain ATCC 39073 / JCM 9320).